We begin with the raw amino-acid sequence, 467 residues long: MLYSEDDKRKQESYRIPLFGSEEESTSIPKYVLKKEPMEPRIAYQLVKDQLMDEGNARQNLATFCQTYMEKEAEILMAETLEKNAIDKSEYPQTAELENRCVNILADLWNAPKDMSYLGTSTVGSSEACMLGGLAMKFRWRNNAEKRGLDIQAKRPNLIISSGYQVCWEKFCVYWDVDMRVVPMDKNHLSLDVDKVFDLVDEYTIGVVGILGITYTGKFDDIQLLDEKVEAYNETNEHQLVIHIDGASGAMFTPFVNPELPWDFRLKNVVSINTSGHKYGLVYPGVGWILWKDKEYLPKELIFEVSYLGGSMPTMAINFSRSASQIIGQYYNFLRYGFEGYREIHEKTKKTAIYLAKTVEKSGYFEIINDGANLPIVCYKMKEGLDVEWTLYDLADQLLMKGWQVPAYPLPADLSDTIIQRFVCRADLGYNVAEEFAADFADAIHNLEHARVLYHDKERNDSYGFTH.

The residue at position 278 (lysine 278) is an N6-(pyridoxal phosphate)lysine.

Belongs to the group II decarboxylase family. The cofactor is pyridoxal 5'-phosphate.

It carries out the reaction L-glutamate + H(+) = 4-aminobutanoate + CO2. In Listeria monocytogenes serovar 1/2a (strain ATCC BAA-679 / EGD-e), this protein is Probable glutamate decarboxylase gamma.